Consider the following 253-residue polypeptide: uncharacterized protein (253 aa).

Positions 17, 36, 62, 89, 123, 158, 162, 191, and 193 each coordinate NADP(+). Catalysis depends on Tyr158, which acts as the Proton acceptor. The active-site Lowers pKa of active site Tyr is the Lys162.

Belongs to the short-chain dehydrogenases/reductases (SDR) family.

The protein localises to the cytoplasm. Its subcellular location is the nucleus. This is an uncharacterized protein from Schizosaccharomyces pombe (strain 972 / ATCC 24843) (Fission yeast).